A 383-amino-acid chain; its full sequence is Retrovirus-related Pol polyprotein from type-1 retrotransposable element R1 3 (383 aa).

One can recognise a Reverse transcriptase domain in the interval valine 1 to valine 88. A nucleic acid-binding endonuclease region spans residues leucine 229 to serine 383.

It catalyses the reaction DNA(n) + a 2'-deoxyribonucleoside 5'-triphosphate = DNA(n+1) + diphosphate. The polypeptide is Retrovirus-related Pol polyprotein from type-1 retrotransposable element R1 3 (Nasonia vitripennis (Parasitic wasp)).